Consider the following 346-residue polypeptide: Ly6/PLAUR domain-containing protein 3 (346 aa).

The N-terminal stretch at 1–30 (MDPARKAGAQAMIWTAGWLLLLLLRGGAQA) is a signal peptide. UPAR/Ly6 domains are found at residues 33-126 (CYSC…ALDP) and 140-222 (CYSC…SRCN). 4 N-linked (GlcNAc...) asparagine glycosylation sites follow: asparagine 118, asparagine 163, asparagine 176, and asparagine 183. Residues 233-324 (PRIPPLVRLP…KGGPQQPHNK (92 aa)) form a disordered region. A compositionally biased stretch (pro residues) spans 234-246 (RIPPLVRLPPPEP). Over residues 247–269 (TTVASTTSVTTSTSAPVRPTSTT) the composition is skewed to low complexity. The span at 283–295 (GVEHEASRDEEPR) shows a compositional bias: basic and acidic residues. Cysteine 326 is lipidated: GPI-anchor amidated cysteine. Positions 327–346 (VAPTAGLAALLLAVAAGVLL) are cleaved as a propeptide — removed in mature form.

As to quaternary structure, binds laminin-1 and laminin-5. Interacts with LGALS3. Interacts with AGR2 and AGR3. N-glycosylated and O-glycosylated. Expressed in placenta, skin and urothelium. Found in suprabasal keratinocytes of chronic wounds. Weak expression is found in esophagus and peripheral blood mononuclear cells. Found in the majority of primary and metastatic transitional cell carcinomas (TCCs) and as well in breast cancer tissues, but not in adjacent normal tissues. High expression is found in the tumor component of some noninvasive superficial lesions and in invasive and metastatic urothelial cancers.

The protein resides in the cell membrane. In terms of biological role, supports cell migration. May be involved in urothelial cell-matrix interactions. May be involved in tumor progression. This Homo sapiens (Human) protein is Ly6/PLAUR domain-containing protein 3 (LYPD3).